Consider the following 365-residue polypeptide: Phosphoserine aminotransferase (365 aa).

Arginine 40 contributes to the L-glutamate binding site. Pyridoxal 5'-phosphate-binding positions include 74-75, phenylalanine 99, threonine 155, aspartate 177, and glutamine 200; that span reads AS. Lysine 201 carries the post-translational modification N6-(pyridoxal phosphate)lysine. A pyridoxal 5'-phosphate-binding site is contributed by 241 to 242; sequence NT.

Belongs to the class-V pyridoxal-phosphate-dependent aminotransferase family. SerC subfamily. Homodimer. Requires pyridoxal 5'-phosphate as cofactor.

The protein localises to the cytoplasm. The enzyme catalyses O-phospho-L-serine + 2-oxoglutarate = 3-phosphooxypyruvate + L-glutamate. It catalyses the reaction 4-(phosphooxy)-L-threonine + 2-oxoglutarate = (R)-3-hydroxy-2-oxo-4-phosphooxybutanoate + L-glutamate. Its pathway is amino-acid biosynthesis; L-serine biosynthesis; L-serine from 3-phospho-D-glycerate: step 2/3. Functionally, catalyzes the reversible conversion of 3-phosphohydroxypyruvate to phosphoserine and of 3-hydroxy-2-oxo-4-phosphonooxybutanoate to phosphohydroxythreonine. This is Phosphoserine aminotransferase from Lactococcus lactis subsp. cremoris (strain SK11).